Consider the following 393-residue polypeptide: Na(+)/H(+) antiporter NhaA (393 aa).

Helical transmembrane passes span Ala-23 to Phe-43, Leu-58 to Leu-78, Met-96 to Leu-116, Gly-126 to Gly-146, Val-155 to Phe-175, Ala-178 to Met-198, Met-201 to Phe-221, Gly-224 to Pro-244, Val-265 to Leu-285, Ile-298 to Ile-318, Leu-334 to Leu-354, and Ile-367 to Ala-387.

Belongs to the NhaA Na(+)/H(+) (TC 2.A.33) antiporter family.

It is found in the cell inner membrane. The catalysed reaction is Na(+)(in) + 2 H(+)(out) = Na(+)(out) + 2 H(+)(in). Its function is as follows. Na(+)/H(+) antiporter that extrudes sodium in exchange for external protons. The protein is Na(+)/H(+) antiporter NhaA of Brucella canis (strain ATCC 23365 / NCTC 10854 / RM-666).